Consider the following 71-residue polypeptide: ATP synthase subunit c (71 aa).

Helical transmembrane passes span 4–24 and 47–67; these read IAAA…NGQV and FIGV…ALIL.

This sequence belongs to the ATPase C chain family. F-type ATPases have 2 components, F(1) - the catalytic core - and F(0) - the membrane proton channel. F(1) has five subunits: alpha(3), beta(3), gamma(1), delta(1), epsilon(1). F(0) has three main subunits: a(1), b(2) and c(10-14). The alpha and beta chains form an alternating ring which encloses part of the gamma chain. F(1) is attached to F(0) by a central stalk formed by the gamma and epsilon chains, while a peripheral stalk is formed by the delta and b chains.

It is found in the cell membrane. In terms of biological role, f(1)F(0) ATP synthase produces ATP from ADP in the presence of a proton or sodium gradient. F-type ATPases consist of two structural domains, F(1) containing the extramembraneous catalytic core and F(0) containing the membrane proton channel, linked together by a central stalk and a peripheral stalk. During catalysis, ATP synthesis in the catalytic domain of F(1) is coupled via a rotary mechanism of the central stalk subunits to proton translocation. Its function is as follows. Key component of the F(0) channel; it plays a direct role in translocation across the membrane. A homomeric c-ring of between 10-14 subunits forms the central stalk rotor element with the F(1) delta and epsilon subunits. This is ATP synthase subunit c from Enterococcus hirae (strain ATCC 9790 / DSM 20160 / JCM 8729 / LMG 6399 / NBRC 3181 / NCIMB 6459 / NCDO 1258 / NCTC 12367 / WDCM 00089 / R).